The primary structure comprises 156 residues: 6,7-dimethyl-8-ribityllumazine synthase (156 aa).

Residues tryptophan 33, 64 to 66 (SVE), and 86 to 88 (VIL) each bind 5-amino-6-(D-ribitylamino)uracil. 91 to 92 (ET) serves as a coordination point for (2S)-2-hydroxy-3-oxobutyl phosphate. The Proton donor role is filled by histidine 94. Residue isoleucine 119 participates in 5-amino-6-(D-ribitylamino)uracil binding. Arginine 133 provides a ligand contact to (2S)-2-hydroxy-3-oxobutyl phosphate.

This sequence belongs to the DMRL synthase family.

The catalysed reaction is (2S)-2-hydroxy-3-oxobutyl phosphate + 5-amino-6-(D-ribitylamino)uracil = 6,7-dimethyl-8-(1-D-ribityl)lumazine + phosphate + 2 H2O + H(+). It functions in the pathway cofactor biosynthesis; riboflavin biosynthesis; riboflavin from 2-hydroxy-3-oxobutyl phosphate and 5-amino-6-(D-ribitylamino)uracil: step 1/2. Its function is as follows. Catalyzes the formation of 6,7-dimethyl-8-ribityllumazine by condensation of 5-amino-6-(D-ribitylamino)uracil with 3,4-dihydroxy-2-butanone 4-phosphate. This is the penultimate step in the biosynthesis of riboflavin. In Tropheryma whipplei (strain TW08/27) (Whipple's bacillus), this protein is 6,7-dimethyl-8-ribityllumazine synthase.